The chain runs to 432 residues: D-amino acid dehydrogenase (432 aa).

V3–Y17 is an FAD binding site.

The protein belongs to the DadA oxidoreductase family. Requires FAD as cofactor.

It catalyses the reaction a D-alpha-amino acid + A + H2O = a 2-oxocarboxylate + AH2 + NH4(+). It functions in the pathway amino-acid degradation; D-alanine degradation; NH(3) and pyruvate from D-alanine: step 1/1. In terms of biological role, oxidative deamination of D-amino acids. This chain is D-amino acid dehydrogenase, found in Ectopseudomonas mendocina (strain ymp) (Pseudomonas mendocina).